The primary structure comprises 448 residues: Homogentisate 1,2-dioxygenase (448 aa).

Residue His-303 is the Proton acceptor of the active site. The Fe cation site is built by His-346 and Glu-352. Residues Tyr-361 and His-382 each contribute to the homogentisate site. Position 382 (His-382) interacts with Fe cation.

The protein belongs to the homogentisate dioxygenase family. In terms of assembly, hexamer; dimer of trimers. It depends on Fe cation as a cofactor.

It carries out the reaction homogentisate + O2 = 4-maleylacetoacetate + H(+). Its pathway is amino-acid degradation; L-phenylalanine degradation; acetoacetate and fumarate from L-phenylalanine: step 4/6. Its function is as follows. Involved in the catabolism of homogentisate (2,5-dihydroxyphenylacetate or 2,5-OH-PhAc), a central intermediate in the degradation of phenylalanine and tyrosine. Catalyzes the oxidative ring cleavage of the aromatic ring of homogentisate to yield maleylacetoacetate. The polypeptide is Homogentisate 1,2-dioxygenase (Rhodopseudomonas palustris (strain BisA53)).